The primary structure comprises 100 residues: Small ribosomal subunit protein uS14c (100 aa).

Belongs to the universal ribosomal protein uS14 family. In terms of assembly, part of the 30S ribosomal subunit.

The protein localises to the plastid. Its subcellular location is the chloroplast. Binds 16S rRNA, required for the assembly of 30S particles. This is Small ribosomal subunit protein uS14c from Adiantum capillus-veneris (Maidenhair fern).